Consider the following 176-residue polypeptide: NAD(P)H-quinone oxidoreductase subunit 6, chloroplastic (176 aa).

Helical transmembrane passes span 10 to 30 (FLLV…VLLT), 32 to 52 (PIYS…FYIL), 61 to 81 (AQLL…VMFM), 95 to 115 (VGSG…ITII), and 152 to 172 (FFLP…GAIA).

The protein belongs to the complex I subunit 6 family. NDH is composed of at least 16 different subunits, 5 of which are encoded in the nucleus.

It localises to the plastid. Its subcellular location is the chloroplast thylakoid membrane. It catalyses the reaction a plastoquinone + NADH + (n+1) H(+)(in) = a plastoquinol + NAD(+) + n H(+)(out). It carries out the reaction a plastoquinone + NADPH + (n+1) H(+)(in) = a plastoquinol + NADP(+) + n H(+)(out). Its function is as follows. NDH shuttles electrons from NAD(P)H:plastoquinone, via FMN and iron-sulfur (Fe-S) centers, to quinones in the photosynthetic chain and possibly in a chloroplast respiratory chain. The immediate electron acceptor for the enzyme in this species is believed to be plastoquinone. Couples the redox reaction to proton translocation, and thus conserves the redox energy in a proton gradient. In Manihot esculenta (Cassava), this protein is NAD(P)H-quinone oxidoreductase subunit 6, chloroplastic (ndhG).